The sequence spans 461 residues: Signal recognition particle receptor FtsY (461 aa).

Residues 105–138 form a TPR repeat; the sequence is FESLYNVAKIYHQLEKPDKALEYAQRAEKLVPYE. GTP-binding positions include 267 to 274, 349 to 353, and 413 to 416; these read GVNGSGKT, DTAGR, and TKLD.

The protein belongs to the GTP-binding SRP family. FtsY subfamily. As to quaternary structure, part of the signal recognition particle protein translocation system, which is composed of SRP and FtsY.

It is found in the cell inner membrane. The protein resides in the cytoplasm. It carries out the reaction GTP + H2O = GDP + phosphate + H(+). In terms of biological role, involved in targeting and insertion of nascent membrane proteins into the cytoplasmic membrane. Acts as a receptor for the complex formed by the signal recognition particle (SRP) and the ribosome-nascent chain (RNC). The sequence is that of Signal recognition particle receptor FtsY from Aquifex aeolicus (strain VF5).